The following is a 306-amino-acid chain: Glutaminase (306 aa).

Positions 64, 115, 159, 166, 190, 242, and 260 each coordinate substrate.

It belongs to the glutaminase family. Homotetramer.

The catalysed reaction is L-glutamine + H2O = L-glutamate + NH4(+). The polypeptide is Glutaminase (Aliivibrio fischeri (strain MJ11) (Vibrio fischeri)).